We begin with the raw amino-acid sequence, 198 residues long: Glycerol-3-phosphate acyltransferase (198 aa).

The next 5 membrane-spanning stretches (helical) occupy residues 2–22 (IIVIITVMVSFLCGSIPTGYL), 55–75 (MITQVMDILKGIIPVLLCMLI), 88–108 (YLSIIVIAVILGHDYTPFLGF), 118–138 (VGAFFLLAPAAVLAGAVVYFV), and 162–182 (IALRLPIEITVCAIIACGLLI).

The protein belongs to the PlsY family. Probably interacts with PlsX.

Its subcellular location is the cell membrane. It catalyses the reaction an acyl phosphate + sn-glycerol 3-phosphate = a 1-acyl-sn-glycero-3-phosphate + phosphate. It functions in the pathway lipid metabolism; phospholipid metabolism. Functionally, catalyzes the transfer of an acyl group from acyl-phosphate (acyl-PO(4)) to glycerol-3-phosphate (G3P) to form lysophosphatidic acid (LPA). This enzyme utilizes acyl-phosphate as fatty acyl donor, but not acyl-CoA or acyl-ACP. The protein is Glycerol-3-phosphate acyltransferase of Clostridium acetobutylicum (strain ATCC 824 / DSM 792 / JCM 1419 / IAM 19013 / LMG 5710 / NBRC 13948 / NRRL B-527 / VKM B-1787 / 2291 / W).